A 393-amino-acid polypeptide reads, in one-letter code: Riboflavin biosynthesis protein RibBA (393 aa).

Residues 1–200 (MQFDNIDSAL…IDDLIEYRKK (200 aa)) are DHBP synthase. Residues 27 to 28 (RE), Asp32, 139 to 143 (RNGHT), and Glu163 contribute to the D-ribulose 5-phosphate site. Glu28 contributes to the Mg(2+) binding site. His142 provides a ligand contact to Mg(2+). Residues 201-393 (LEPEIEFKAK…TKKIKMGHLI (193 aa)) form a GTP cyclohydrolase II region. Residue 249-253 (RLHSA) participates in GTP binding. Residues Cys254, Cys265, and Cys267 each contribute to the Zn(2+) site. Residues Gln270, 291 to 293 (EGR), and Thr313 each bind GTP. Catalysis depends on Asp325, which acts as the Proton acceptor; for GTP cyclohydrolase activity. The Nucleophile; for GTP cyclohydrolase activity role is filled by Arg327. GTP-binding residues include Ser348 and Lys353.

The protein in the N-terminal section; belongs to the DHBP synthase family. This sequence in the C-terminal section; belongs to the GTP cyclohydrolase II family. It depends on Mg(2+) as a cofactor. Mn(2+) serves as cofactor. Zn(2+) is required as a cofactor.

The catalysed reaction is D-ribulose 5-phosphate = (2S)-2-hydroxy-3-oxobutyl phosphate + formate + H(+). The enzyme catalyses GTP + 4 H2O = 2,5-diamino-6-hydroxy-4-(5-phosphoribosylamino)-pyrimidine + formate + 2 phosphate + 3 H(+). The protein operates within cofactor biosynthesis; riboflavin biosynthesis; 2-hydroxy-3-oxobutyl phosphate from D-ribulose 5-phosphate: step 1/1. It functions in the pathway cofactor biosynthesis; riboflavin biosynthesis; 5-amino-6-(D-ribitylamino)uracil from GTP: step 1/4. In terms of biological role, catalyzes the conversion of D-ribulose 5-phosphate to formate and 3,4-dihydroxy-2-butanone 4-phosphate. Its function is as follows. Catalyzes the conversion of GTP to 2,5-diamino-6-ribosylamino-4(3H)-pyrimidinone 5'-phosphate (DARP), formate and pyrophosphate. This Staphylococcus aureus (strain MSSA476) protein is Riboflavin biosynthesis protein RibBA.